The sequence spans 171 residues: Small ribosomal subunit protein uS13 (171 aa).

2 disordered regions span residues 1–22 (MGKA…AAKK) and 142–171 (RHEK…RKKE). Basic and acidic residues predominate over residues 10 to 22 (KSDKEAAKPAAKK). Positions 142 to 158 (RHEKGKKVRGQRTRSNG) are enriched in basic residues.

The protein belongs to the universal ribosomal protein uS13 family. As to quaternary structure, part of the 30S ribosomal subunit. Forms a loose heterodimer with protein S19. Forms two bridges to the 50S subunit in the 70S ribosome.

Located at the top of the head of the 30S subunit, it contacts several helices of the 16S rRNA. In the 70S ribosome it contacts the 23S rRNA (bridge B1a) and protein L5 of the 50S subunit (bridge B1b), connecting the 2 subunits; these bridges are implicated in subunit movement. The sequence is that of Small ribosomal subunit protein uS13 from Thermoplasma volcanium (strain ATCC 51530 / DSM 4299 / JCM 9571 / NBRC 15438 / GSS1).